The primary structure comprises 402 residues: MAAAAALRAPAQSSVTFEDVAVNFSLEEWSLLNEAQRCLYRDVMLETLTLISSLGCWHGGEDEAAPSKQSTCIHIYKDQGGHSGERPYECGEYRKLFKNKSCLTEPRRDHKHRNVRTGERPYECSKYGKLFHQKPTLHIHERFHTGQKTYECSECGKSFHQSSSLLQRQTLHTRERPYECIECGKAFAEKSSLINHRKVHSGAKRYECNECGKSFAYTSSLIKHRRIHTGERPYECSECGRSFAENSSLIKHLRVHTGERPYECVECGKSFRRSSSLLQHQRVHTRERPYECSECGKSFSLRSNLIHHQRVHTGERHECGQCGKSFSRKSSLIIHLRVHTGERPYECSDCGKSFAENSSLIKHLRVHTGERPYECIDCGKSFRHSSSFRRHQRVHTGMRPYK.

A KRAB domain is found at 15–87 (VTFEDVAVNF…DQGGHSGERP (73 aa)). The segment at 88 to 116 (YECGEYRKLFKNKSCLTEPRRDHKHRNVR) adopts a C2H2-type 1; degenerate zinc-finger fold. The C2H2-type 2; degenerate zinc finger occupies 122 to 144 (YECSKYGKLFHQKPTLHIHERFH). The segment at 150-172 (YECSECGKSFHQSSSLLQRQTLH) adopts a C2H2-type 3; degenerate zinc-finger fold. C2H2-type zinc fingers lie at residues 178–200 (YECIECGKAFAEKSSLINHRKVH), 206–228 (YECNECGKSFAYTSSLIKHRRIH), 234–256 (YECSECGRSFAENSSLIKHLRVH), 262–284 (YECVECGKSFRRSSSLLQHQRVH), 290–312 (YECSECGKSFSLRSNLIHHQRVH), 317–339 (HECGQCGKSFSRKSSLIIHLRVH), 345–367 (YECSDCGKSFAENSSLIKHLRVH), and 373–395 (YECIDCGKSFRHSSSFRRHQRVH).

This sequence belongs to the krueppel C2H2-type zinc-finger protein family.

It localises to the nucleus. May be involved in transcriptional regulation. The polypeptide is Zinc finger protein 586 (ZNF586) (Homo sapiens (Human)).